Reading from the N-terminus, the 188-residue chain is dCTP deaminase (188 aa).

Residues 111-116 (KSTYAR), 135-137 (TLE), Gln-156, Tyr-170, and Gln-180 contribute to the dCTP site. The active-site Proton donor/acceptor is the Glu-137.

It belongs to the dCTP deaminase family. As to quaternary structure, homotrimer.

The catalysed reaction is dCTP + H2O + H(+) = dUTP + NH4(+). Its pathway is pyrimidine metabolism; dUMP biosynthesis; dUMP from dCTP (dUTP route): step 1/2. Catalyzes the deamination of dCTP to dUTP. The polypeptide is dCTP deaminase (Pseudomonas fluorescens (strain Pf0-1)).